We begin with the raw amino-acid sequence, 506 residues long: FAD-linked oxidoreductase aurO (506 aa).

In terms of domain architecture, FAD-binding PCMH-type spans 92 to 260; the sequence is ITAQPLAICR…AETDVRVYPM (169 aa).

The protein belongs to the oxygen-dependent FAD-linked oxidoreductase family. In terms of assembly, might be part of an extracellular enzyme complex composed of GIP1, aurF, aurO and aurS. Requires FAD as cofactor.

The protein localises to the secreted. The protein resides in the extracellular space. It participates in pigment biosynthesis. FAD-linked oxidoreductase; part of the gene cluster that mediates the biosynthesis of aurofusarin, a red mycelium pigment which is acting as a mycotoxin. The first step is performed by the polyketide synthase which condenses one acetyl-CoA and 6 malonyl-CoA units to form the first intermediate, the cyclic heptaketide and yellow pigment YWA1. The C2 hydroxyl group in the pyrone ring of YWA1 is probably formed during ring closure by an aldol-type cyclization reaction. The dehydratase aurZ then acts as the first tailoring enzyme in the aurofusarin biosynthetic pathway by converting YWA1 to nor-rubrofusarin. Nor-rubrofusarin is then methylated to rubrofusarin by the O-methyltransferase aurJ. Rubrofusarin is then transported across the plasma membrane by the rubrofusarin-specific pump aurT for further enzymatic processing by the extracellular complex composed of GIP1, aurF, aurO and aurS to yield aurofusarin. This Gibberella zeae (strain ATCC MYA-4620 / CBS 123657 / FGSC 9075 / NRRL 31084 / PH-1) (Wheat head blight fungus) protein is FAD-linked oxidoreductase aurO.